A 137-amino-acid chain; its full sequence is Small ribosomal subunit protein uS12 (137 aa).

The span at 31 to 41 (MSRKQTNNTAP) shows a compositional bias: polar residues. Residues 31-57 (MSRKQTNNTAPQKRGVATRVGTMTPKK) are disordered. D102 carries the 3-methylthioaspartic acid modification.

It belongs to the universal ribosomal protein uS12 family. Part of the 30S ribosomal subunit. Contacts proteins S8 and S17. May interact with IF1 in the 30S initiation complex.

Functionally, with S4 and S5 plays an important role in translational accuracy. In terms of biological role, interacts with and stabilizes bases of the 16S rRNA that are involved in tRNA selection in the A site and with the mRNA backbone. Located at the interface of the 30S and 50S subunits, it traverses the body of the 30S subunit contacting proteins on the other side and probably holding the rRNA structure together. The combined cluster of proteins S8, S12 and S17 appears to hold together the shoulder and platform of the 30S subunit. This is Small ribosomal subunit protein uS12 from Oenococcus oeni (strain ATCC BAA-331 / PSU-1).